The following is a 116-amino-acid chain: Orphan antitoxin YagB (116 aa).

The protein belongs to the CbeA/YafW/YfjZ antitoxin family.

Functionally, putative antitoxin component of a type IV toxin-antitoxin (TA) system; its cognate toxin is unknown. This is Orphan antitoxin YagB (yagB) from Escherichia coli (strain K12).